We begin with the raw amino-acid sequence, 249 residues long: INO80 complex subunit 1 (249 aa).

2 consecutive C2H2-type zinc fingers follow at residues 73–100 and 106–131; these read YTCEWDDCPRKGMVQTSRFALVAHLRSH and FICSVPECDRSFTRSDALAKHMRTVH.

In terms of assembly, component of the INO80 chromatin remodeling complex.

The protein localises to the nucleus. It is found in the cytoplasm. In terms of biological role, component of the INO80 complex which remodels chromatin by shifting nucleosomes and is involved in DNA repair. The chain is INO80 complex subunit 1 (iec1) from Schizosaccharomyces pombe (strain 972 / ATCC 24843) (Fission yeast).